A 131-amino-acid chain; its full sequence is Snaclec coagulation factor IX/factor X-binding protein subunit A (131 aa).

The C-type lectin domain maps to 1 to 131 (DCLPGWSSHE…EEPQRFTCEI (131 aa)). Disulfide bonds link C2-C13, C30-C129, and C104-C121. Residues S41, E43, and E47 each coordinate Ca(2+). A Ca(2+)-binding site is contributed by E130.

It belongs to the snaclec family. Heterodimer of subunits A and B; disulfide-linked. In terms of tissue distribution, expressed by the venom gland.

It is found in the secreted. In terms of biological role, anticoagulant protein which binds to coagulation factor IX (F9) and coagulation factor X (F10) in the presence of calcium. It may bind the gamma-carboxyglutamic acid-domain regions of factors with a 1 to 1 stoichiometry. The dissociation constant (K(d)) are 6.6 nM for factor IX (F9) and 125 nM for factor X (F10). Does not bind carbohydrates. This is Snaclec coagulation factor IX/factor X-binding protein subunit A from Echis carinatus (Saw-scaled viper).